The sequence spans 1380 residues: Carboxypeptidase D (1380 aa).

Residues 1–31 form the signal peptide; it reads MASGRDERPPWRLGRLLLLMCLLLLGSSARA. Residues 32–1299 lie on the Extracellular side of the membrane; sequence AHIKKAEATT…DNRIFGLPRE (1268 aa). The region spanning 57–380 is the Peptidase M14 1 domain; it reads RYYHEEELES…ESLITLIEKV (324 aa). Zn(2+)-binding residues include His139 and Glu142. A Cell attachment site motif is present at residues 162–164; it reads RGD. The N-linked (GlcNAc...) asparagine glycan is linked to Asn172. A disordered region spans residues 190–232; sequence AREGDCGFGDGGPSGASGRDNSRGRDLNRSFPDQFSTGEPPAL. Residues 195–204 are compositionally biased toward gly residues; sequence CGFGDGGPSG. Asn217 is a glycosylation site (N-linked (GlcNAc...) asparagine). Zn(2+) is bound at residue His257. Phosphotyrosine is present on Tyr265. The residue at position 270 (Ser270) is a Phosphoserine. Glu350 acts as the Proton donor/acceptor in catalysis. N-linked (GlcNAc...) asparagine glycosylation is found at Asn399, Asn410, Asn429, and Asn522. In terms of domain architecture, Peptidase M14 2 spans 502 to 792; that stretch reads HHHHFPDMEI…RSLIQFMKQV (291 aa). The Zn(2+) site is built by His564 and Glu567. Asn626 is a glycosylation site (N-linked (GlcNAc...) asparagine). His671 provides a ligand contact to Zn(2+). Catalysis depends on Glu762, which acts as the Proton donor/acceptor. Residues Asn811, Asn855, Asn867, and Asn879 are each glycosylated (N-linked (GlcNAc...) asparagine). The segment at 874–899 is disordered; it reads STDSNNESKKGKGASSSTNDASDPTT. The span at 887–897 shows a compositional bias: polar residues; the sequence is ASSSTNDASDP. Positions 932 to 1211 constitute a Peptidase M14 3 domain; it reads RYHSYKDLSE…RSLLSMLVEV (280 aa). N-linked (GlcNAc...) asparagine glycosylation is found at Asn955, Asn978, Asn1070, and Asn1142. The chain crosses the membrane as a helical span at residues 1300-1320; the sequence is LVVTVSGATMSALILTACIIW. Residues Cys1317, Cys1321, and Cys1323 are each lipidated (S-palmitoyl cysteine). Residues 1321 to 1380 are Cytoplasmic-facing; that stretch reads CICSIKSNRHKDGFHRLRQHHDEYEDEIRMMSTGSKKSLLSHEFQDETDTEEETLYSSKH. Residues Ser1358 and Ser1361 each carry the phosphoserine modification. Residues 1359 to 1380 form a disordered region; sequence LLSHEFQDETDTEEETLYSSKH. A phosphothreonine mark is found at Thr1368 and Thr1370.

It belongs to the peptidase M14 family. It depends on Zn(2+) as a cofactor. As to expression, highly expressed in placenta, pancreas and hepatoma cells. Lower levels found in skeletal muscle, heart and colon carcinoma and melanoma cell lines.

Its subcellular location is the cell membrane. The catalysed reaction is Releases C-terminal Arg and Lys from polypeptides.. This Homo sapiens (Human) protein is Carboxypeptidase D (CPD).